Here is a 309-residue protein sequence, read N- to C-terminus: Aurora kinase C (309 aa).

Positions 1-33 are disordered; sequence MSSPRAVVQLGKAQPAGEELATANQTAQQPSSP. Over residues 22 to 32 the composition is skewed to polar residues; it reads TANQTAQQPSS. The Protein kinase domain maps to 43 to 293; that stretch reads FEIGRPLGKG…LAQILKHPWV (251 aa). ATP is bound by residues 49-57 and lysine 72; that span reads LGKGKFGNV. Aspartate 166 functions as the Proton acceptor in the catalytic mechanism. At threonine 198 the chain carries Phosphothreonine; by PKA. Positions 292–309 are interaction with BIRC5; the sequence is WVQAHSRRVLPPCAQMAS.

It belongs to the protein kinase superfamily. Ser/Thr protein kinase family. Aurora subfamily. As to quaternary structure, component of the chromosomal passenger complex (CPC) composed of at least BIRC5/survivin, CDCA8/borealin, INCENP, AURKB or AURKC; predominantly independent AURKB- and AURKC-containing complexes exist; in the complex interacts directly with BIRC5/survivin and INCENP. Interacts with TACC1. Isoform 1 and isoform 2 are expressed in testis. Elevated expression levels were seen only in a subset of cancer cell lines such as Hep-G2, Huh-7 and HeLa. Expression is maximum at M phase.

Its subcellular location is the nucleus. It localises to the chromosome. The protein localises to the centromere. The protein resides in the cytoplasm. It is found in the cytoskeleton. Its subcellular location is the spindle. The catalysed reaction is L-seryl-[protein] + ATP = O-phospho-L-seryl-[protein] + ADP + H(+). It catalyses the reaction L-threonyl-[protein] + ATP = O-phospho-L-threonyl-[protein] + ADP + H(+). Its activity is regulated as follows. Okadaic acid, an inhibitor of protein phosphatase 1 (PP1), protein phosphatase 2A (PP2A) and protein phosphatase 5 (PP5), increases AURKC activity. AURKC is also stabilized through its interaction with INCENP, which also acts as an activator. Functionally, serine/threonine-protein kinase component of the chromosomal passenger complex (CPC), a complex that acts as a key regulator of mitosis. The CPC complex has essential functions at the centromere in ensuring correct chromosome alignment and segregation and is required for chromatin-induced microtubule stabilization and spindle assembly. Also plays a role in meiosis and more particularly in spermatogenesis. Has redundant cellular functions with AURKB and can rescue an AURKB knockdown. Like AURKB, AURKC phosphorylates histone H3 at 'Ser-10' and 'Ser-28'. AURKC phosphorylates the CPC complex subunits BIRC5/survivin and INCENP leading to increased AURKC activity. Phosphorylates TACC1, another protein involved in cell division, at 'Ser-228'. This Homo sapiens (Human) protein is Aurora kinase C (AURKC).